An 800-amino-acid polypeptide reads, in one-letter code: Blood-group-substance endo-1,4-beta-galactosidase (800 aa).

Positions 1–35 are cleaved as a signal peptide; that stretch reads MGGVTMKNNLKKYIKYILSVILVFFVGVNGMEVYA.

It belongs to the glycosyl hydrolase 98 family.

It localises to the secreted. The enzyme catalyses Endohydrolysis of (1-&gt;4)-beta-D-galactosidic linkages in blood group A and B substances.. Endo-beta-galactosidase capable of releasing both the blood group A trisaccharide (A-Tri; GalNAcalpha1--&gt;3(Fucalpha1--&gt;2)Gal) and B trisaccharide (B-Tri; Galalpha1--&gt;3(Fucalpha1--&gt;2)Gal) glycotopes from blood group A- and B-containing glycoconjugates, respectively. The protein is Blood-group-substance endo-1,4-beta-galactosidase (eabC) of Clostridium perfringens.